Consider the following 586-residue polypeptide: Penicillin-binding protein activator LpoA (586 aa).

The N-terminal stretch at 1–26 (MLSILMQGLRLKKCFLPILVMFFLAG) is a signal peptide. Residue Cys-27 is the site of N-palmitoyl cysteine attachment. A lipid anchor (S-diacylglycerol cysteine) is attached at Cys-27.

Belongs to the LpoA family. Interacts with PBP1a.

The protein resides in the cell outer membrane. Functionally, regulator of peptidoglycan synthesis that is essential for the function of penicillin-binding protein 1A (PBP1a). The polypeptide is Penicillin-binding protein activator LpoA (Histophilus somni (strain 2336) (Haemophilus somnus)).